Reading from the N-terminus, the 152-residue chain is 17.1 kDa class II heat shock protein (152 aa).

Residues 36 to 152 form the sHSP domain; sequence DAKAMAATPA…KPKTIQVKVA (117 aa).

It belongs to the small heat shock protein (HSP20) family.

The protein localises to the cytoplasm. The polypeptide is 17.1 kDa class II heat shock protein (HSP17.7) (Pisum sativum (Garden pea)).